The sequence spans 54 residues: MASATFIEVILAIILPPVGVFLRYGLAVEFWICLLLTLLGYIPGIIYAVYVLVA.

A run of 2 helical transmembrane segments spans residues 2-22 and 34-54; these read ASAT…GVFL and LLLT…VLVA.

The protein belongs to the UPF0057 (PMP3) family.

It localises to the membrane. The polypeptide is Low temperature-induced protein lt101.2 (LT101.2) (Hordeum vulgare (Barley)).